A 250-amino-acid polypeptide reads, in one-letter code: NAD-dependent protein deacylase 1 (250 aa).

In terms of domain architecture, Deacetylase sirtuin-type spans 1–250 (MRAVVELLAG…PELLRRAFPG (250 aa)). 19–39 (GAGVSAESGIPTFRDALGGLW) contributes to the NAD(+) binding site. Positions 64 and 67 each coordinate substrate. 98–101 (QNVD) lines the NAD(+) pocket. The Proton acceptor role is filled by histidine 116. The Zn(2+) site is built by cysteine 124, cysteine 127, cysteine 152, and cysteine 155. Residues 192 to 194 (GTS), 218 to 220 (NPQ), and alanine 236 contribute to the NAD(+) site.

It belongs to the sirtuin family. Class III subfamily. Requires Zn(2+) as cofactor.

The protein resides in the cytoplasm. It catalyses the reaction N(6)-acetyl-L-lysyl-[protein] + NAD(+) + H2O = 2''-O-acetyl-ADP-D-ribose + nicotinamide + L-lysyl-[protein]. The enzyme catalyses N(6)-succinyl-L-lysyl-[protein] + NAD(+) + H2O = 2''-O-succinyl-ADP-D-ribose + nicotinamide + L-lysyl-[protein]. Its function is as follows. NAD-dependent lysine deacetylase and desuccinylase that specifically removes acetyl and succinyl groups on target proteins. Modulates the activities of several proteins which are inactive in their acylated form. The protein is NAD-dependent protein deacylase 1 of Pseudomonas aeruginosa (strain ATCC 15692 / DSM 22644 / CIP 104116 / JCM 14847 / LMG 12228 / 1C / PRS 101 / PAO1).